The sequence spans 33 residues: Glutaminase-asparaginase (33 aa).

The Asparaginase/glutaminase domain occupies 1 to 33; sequence NVVVLATGGTIAGAGTNAFASQXGPLGMVVEGK. T10 acts as the Acyl-ester intermediate in catalysis.

It belongs to the asparaginase 1 family. As to quaternary structure, homotetramer.

The protein localises to the periplasm. It catalyses the reaction L-glutamine + H2O = L-glutamate + NH4(+). It carries out the reaction L-asparagine + H2O = L-aspartate + NH4(+). In Delftia acidovorans (Pseudomonas acidovorans), this protein is Glutaminase-asparaginase (ansB).